Here is a 228-residue protein sequence, read N- to C-terminus: MNGDLNRLMARLGYQFQDLSLLELALTHRSVSRHRNYERLEFLGDAQLGQIISVALFEQFPEAAEGQLTRMRASLVRGQTLALVARELGLGEYLVLGGGELKSGGFRRDSILADALESIIGAMLLDGGEPRCREVVLAWFAPRLDAISPQSAQKDAKTRLQEWLQARKFELPTYEVTQVEGLAPKQTFDVQCSLDNVQQIFIAQGASRRKAEQEAASLALEWLEQQYD.

The RNase III domain maps to Leu5–Gly128. Position 41 (Glu41) interacts with Mg(2+). Asp45 is a catalytic residue. Mg(2+) is bound by residues Asp114 and Glu117. Residue Glu117 is part of the active site. The region spanning Asp155–Gln225 is the DRBM domain.

The protein belongs to the ribonuclease III family. As to quaternary structure, homodimer. Mg(2+) serves as cofactor.

The protein localises to the cytoplasm. It carries out the reaction Endonucleolytic cleavage to 5'-phosphomonoester.. Functionally, digests double-stranded RNA. Involved in the processing of primary rRNA transcript to yield the immediate precursors to the large and small rRNAs (23S and 16S). Processes some mRNAs, and tRNAs when they are encoded in the rRNA operon. Processes pre-crRNA and tracrRNA of type II CRISPR loci if present in the organism. This is Ribonuclease 3 from Alcanivorax borkumensis (strain ATCC 700651 / DSM 11573 / NCIMB 13689 / SK2).